Here is a 440-residue protein sequence, read N- to C-terminus: Trigger factor (440 aa).

The 86-residue stretch at 163 to 248 (GDTVVIDFKG…VHEVKTKELP (86 aa)) folds into the PPIase FKBP-type domain.

The protein belongs to the FKBP-type PPIase family. Tig subfamily.

Its subcellular location is the cytoplasm. It carries out the reaction [protein]-peptidylproline (omega=180) = [protein]-peptidylproline (omega=0). In terms of biological role, involved in protein export. Acts as a chaperone by maintaining the newly synthesized protein in an open conformation. Functions as a peptidyl-prolyl cis-trans isomerase. The sequence is that of Trigger factor from Lactiplantibacillus plantarum (strain ATCC BAA-793 / NCIMB 8826 / WCFS1) (Lactobacillus plantarum).